Reading from the N-terminus, the 225-residue chain is N-(5'-phosphoribosyl)anthranilate isomerase (225 aa).

It belongs to the TrpF family.

The catalysed reaction is N-(5-phospho-beta-D-ribosyl)anthranilate = 1-(2-carboxyphenylamino)-1-deoxy-D-ribulose 5-phosphate. It participates in amino-acid biosynthesis; L-tryptophan biosynthesis; L-tryptophan from chorismate: step 3/5. The protein is N-(5'-phosphoribosyl)anthranilate isomerase of Nitrobacter winogradskyi (strain ATCC 25391 / DSM 10237 / CIP 104748 / NCIMB 11846 / Nb-255).